The following is an 89-amino-acid chain: Elongation factor 1-beta (89 aa).

Belongs to the EF-1-beta/EF-1-delta family.

Functionally, promotes the exchange of GDP for GTP in EF-1-alpha/GDP, thus allowing the regeneration of EF-1-alpha/GTP that could then be used to form the ternary complex EF-1-alpha/GTP/AAtRNA. This chain is Elongation factor 1-beta, found in Methanococcoides burtonii (strain DSM 6242 / NBRC 107633 / OCM 468 / ACE-M).